Reading from the N-terminus, the 677-residue chain is UvrABC system protein B (677 aa).

Residues 26-414 form the Helicase ATP-binding domain; the sequence is DNLDAGLAHQ…SGNEVVEQVV (389 aa). 39-46 contributes to the ATP binding site; sequence GVTGSGKT. Residues 92 to 115 carry the Beta-hairpin motif; sequence YYDYYQPEAYVPTTDTFIEKDASI. The Helicase C-terminal domain maps to 432-598; sequence QVDDLMSEIR…GLNKDITDVM (167 aa). Positions 637–672 constitute a UVR domain; the sequence is MKEIDAKEKEMYKAAQNLEFEQAGKLRDEVAELREQ.

It belongs to the UvrB family. In terms of assembly, forms a heterotetramer with UvrA during the search for lesions. Interacts with UvrC in an incision complex.

The protein resides in the cytoplasm. Its function is as follows. The UvrABC repair system catalyzes the recognition and processing of DNA lesions. A damage recognition complex composed of 2 UvrA and 2 UvrB subunits scans DNA for abnormalities. Upon binding of the UvrA(2)B(2) complex to a putative damaged site, the DNA wraps around one UvrB monomer. DNA wrap is dependent on ATP binding by UvrB and probably causes local melting of the DNA helix, facilitating insertion of UvrB beta-hairpin between the DNA strands. Then UvrB probes one DNA strand for the presence of a lesion. If a lesion is found the UvrA subunits dissociate and the UvrB-DNA preincision complex is formed. This complex is subsequently bound by UvrC and the second UvrB is released. If no lesion is found, the DNA wraps around the other UvrB subunit that will check the other stand for damage. The sequence is that of UvrABC system protein B from Idiomarina loihiensis (strain ATCC BAA-735 / DSM 15497 / L2-TR).